Here is a 337-residue protein sequence, read N- to C-terminus: Gastrula zinc finger protein XlCGF26.1 (337 aa).

12 C2H2-type zinc fingers span residues 6–28 (FDCT…YKIH), 34–56 (FICA…SKIH), 62–84 (FPCT…NKIH), 90–112 (FICA…SKIH), 118–140 (FPCT…NKIH), 146–168 (FICA…SKIH), 174–196 (FPCT…NKIH), 202–224 (FTCT…VKIH), 230–252 (FTCT…NKIH), 258–280 (FTCT…FKIH), 286–309 (FSCT…KRTH), and 315–337 (FTCT…NKIH).

The protein belongs to the krueppel C2H2-type zinc-finger protein family.

Its subcellular location is the nucleus. Functionally, may be involved in transcriptional regulation. This chain is Gastrula zinc finger protein XlCGF26.1, found in Xenopus laevis (African clawed frog).